Here is a 164-residue protein sequence, read N- to C-terminus: Cyclic pyranopterin monophosphate synthase (164 aa).

Residues 75–77 (MCH) and 116–117 (ME) contribute to the substrate site. Residue D131 is part of the active site.

It belongs to the MoaC family. As to quaternary structure, homohexamer; trimer of dimers.

It catalyses the reaction (8S)-3',8-cyclo-7,8-dihydroguanosine 5'-triphosphate = cyclic pyranopterin phosphate + diphosphate. It participates in cofactor biosynthesis; molybdopterin biosynthesis. Functionally, catalyzes the conversion of (8S)-3',8-cyclo-7,8-dihydroguanosine 5'-triphosphate to cyclic pyranopterin monophosphate (cPMP). In Staphylococcus aureus (strain USA300), this protein is Cyclic pyranopterin monophosphate synthase.